The chain runs to 402 residues: Multidrug resistance protein MdtH (402 aa).

Residues 1–12 are Cytoplasmic-facing; it reads MSRVSQARNLGK. A helical membrane pass occupies residues 13 to 33; the sequence is YFLLIDNMLVVLVFFVVFPLI. Over 34–98 the chain is Periplasmic; sequence SIRFVDQMGW…GFATMGIAHE (65 aa). A helical membrane pass occupies residues 99–116; it reads PWLLWFSCFLSGLGGTLF. The Cytoplasmic portion of the chain corresponds to 117–138; the sequence is DPPRSALVVKLIRPEQRGRFFS. A helical membrane pass occupies residues 139-159; that stretch reads LLMMQDSAGAVIGALLGSWLL. At 160–164 the chain is on the periplasmic side; it reads QYDFR. Residues 165–185 form a helical membrane-spanning segment; it reads LVCATGAILFILCALFNAWLL. Topologically, residues 186 to 213 are cytoplasmic; the sequence is PAWKLSTVRTPVREGMRRVMSDKRFVTY. The chain crosses the membrane as a helical span at residues 214 to 234; the sequence is VLTLAGYYMLAVQVMLMLPIM. Residues 235–243 are Periplasmic-facing; the sequence is VNDIAGSPA. The chain crosses the membrane as a helical span at residues 244–264; it reads AVKWMYAIEACLSLTLLYPIA. The Cytoplasmic portion of the chain corresponds to 265–276; that stretch reads RWSEKRFRLEHR. The chain crosses the membrane as a helical span at residues 277-297; sequence LMAGLLVMSLSMIPIGMVGNL. The Periplasmic segment spans residues 298-299; that stretch reads QQ. A helical transmembrane segment spans residues 300–320; that stretch reads LFTLICAFYIGSVIAEPARET. Residues 321–339 are Cytoplasmic-facing; sequence LSASLADARARGSYMGFSR. A helical transmembrane segment spans residues 340-360; the sequence is LGLAIGGAIGYIGGGWLFDMG. The Periplasmic portion of the chain corresponds to 361–367; it reads KALTQPE. A helical transmembrane segment spans residues 368 to 388; it reads LPWMMLGIIGFITFLALGWQF. Over 389–402 the chain is Cytoplasmic; the sequence is SHKRTPRRMLEPGA.

This sequence belongs to the major facilitator superfamily. DHA1 family. MdtH (TC 2.A.1.2.21) subfamily.

It localises to the cell inner membrane. This chain is Multidrug resistance protein MdtH, found in Salmonella choleraesuis (strain SC-B67).